A 400-amino-acid chain; its full sequence is Subtilisin-like protease 7 (400 aa).

Residues 1–20 (MGFITKAIPLALAAASVING) form the signal peptide. Positions 21-119 (AEILETRAGV…IERDARVQIN (99 aa)) are excised as a propeptide. One can recognise an Inhibitor I9 domain in the interval 36 to 118 (KYIVVMNDGI…YIERDARVQI (83 aa)). A Peptidase S8 domain is found at 129–400 (SWGLARVGSK…SKLINNGSGM (272 aa)). Residues Asp161 and His192 each act as charge relay system in the active site. 2 N-linked (GlcNAc...) asparagine glycosylation sites follow: Asn222 and Asn252. The Charge relay system role is filled by Ser346. Residue Asn396 is glycosylated (N-linked (GlcNAc...) asparagine).

Belongs to the peptidase S8 family.

The protein localises to the secreted. Its function is as follows. Secreted subtilisin-like serine protease with keratinolytic activity that contributes to pathogenicity. The sequence is that of Subtilisin-like protease 7 (SUB7) from Trichophyton soudanense.